Consider the following 291-residue polypeptide: ATP synthase gamma chain (291 aa).

It belongs to the ATPase gamma chain family. As to quaternary structure, F-type ATPases have 2 components, CF(1) - the catalytic core - and CF(0) - the membrane proton channel. CF(1) has five subunits: alpha(3), beta(3), gamma(1), delta(1), epsilon(1). CF(0) has three main subunits: a, b and c.

Its subcellular location is the cell membrane. In terms of biological role, produces ATP from ADP in the presence of a proton gradient across the membrane. The gamma chain is believed to be important in regulating ATPase activity and the flow of protons through the CF(0) complex. The protein is ATP synthase gamma chain of Streptococcus pyogenes serotype M1.